The primary structure comprises 551 residues: Rhodopsin kinase grk7-a (551 aa).

Position 36 is a phosphoserine (serine 36). The RGS domain maps to 57-174 (YQSICVEQPI…QNSPFYDRFL (118 aa)). The 263-residue stretch at 189–451 (FYEFRILGKG…DDDPRKHAFF (263 aa)) folds into the Protein kinase domain. ATP contacts are provided by residues 195-203 (LGKGGFGEV) and lysine 218. Aspartate 314 serves as the catalytic Proton acceptor. Residues 452–517 (KSINFQRLEA…GAIPISWQKE (66 aa)) enclose the AGC-kinase C-terminal domain. Serine 487 bears the Phosphoserine mark. The interval 529 to 551 (DPSREATGGGGNSGEKSGVCSIL) is disordered. Low complexity predominate over residues 542–551 (GEKSGVCSIL). Cysteine 548 carries the post-translational modification Cysteine methyl ester. A lipid anchor (S-geranylgeranyl cysteine) is attached at cysteine 548. The propeptide at 549–551 (SIL) is removed in mature form.

This sequence belongs to the protein kinase superfamily. AGC Ser/Thr protein kinase family. GPRK subfamily. Autophosphorylated in vitro at Ser-487. Phosphorylation at Ser-36 is regulated by light and activated by cAMP.

It is found in the membrane. The catalysed reaction is L-threonyl-[rhodopsin] + ATP = O-phospho-L-threonyl-[rhodopsin] + ADP + H(+). It carries out the reaction L-seryl-[rhodopsin] + ATP = O-phospho-L-seryl-[rhodopsin] + ADP + H(+). Functionally, retina-specific kinase involved in the shutoff of the photoresponse and adaptation to changing light conditions via cone opsin phosphorylation, including rhodopsin (RHO). The chain is Rhodopsin kinase grk7-a (grk7-a) from Xenopus laevis (African clawed frog).